The sequence spans 590 residues: Aspartate--tRNA(Asp/Asn) ligase (590 aa).

Glu-175 is an L-aspartate binding site. Residues 199–202 (QQYK) form an aspartate region. L-aspartate is bound by residues Arg-221 and His-450. 221–223 (RDE) provides a ligand contact to ATP. An ATP-binding site is contributed by Glu-484. Arg-491 lines the L-aspartate pocket. 536–539 (GVDR) is an ATP binding site.

This sequence belongs to the class-II aminoacyl-tRNA synthetase family. Type 1 subfamily. Homodimer.

It is found in the cytoplasm. It catalyses the reaction tRNA(Asx) + L-aspartate + ATP = L-aspartyl-tRNA(Asx) + AMP + diphosphate. Aspartyl-tRNA synthetase with relaxed tRNA specificity since it is able to aspartylate not only its cognate tRNA(Asp) but also tRNA(Asn). Reaction proceeds in two steps: L-aspartate is first activated by ATP to form Asp-AMP and then transferred to the acceptor end of tRNA(Asp/Asn). The chain is Aspartate--tRNA(Asp/Asn) ligase from Bradyrhizobium diazoefficiens (strain JCM 10833 / BCRC 13528 / IAM 13628 / NBRC 14792 / USDA 110).